We begin with the raw amino-acid sequence, 515 residues long: Bifunctional dihydrofolate reductase-thymidylate synthase (515 aa).

The DHFR domain occupies 26-228 (AFSIVVAADQ…LSYEIMKYVP (203 aa)). Val30 is a binding site for substrate. NADP(+) contacts are provided by residues Ala32, 38 to 44 (GIGDGET), 81 to 83 (RKT), and 101 to 104 (LSCR). 3 residues coordinate substrate: Ile154, Tyr160, and Thr178. NADP(+) is bound at residue 155–162 (GGARVYTE). Positions 233–515 (ERQYLELIDR…YPPIKMEMAV (283 aa)) are thymidylate synthase. Position 253 (Arg253) interacts with dUMP. Residue Cys395 is part of the active site. Residues His396, 416 to 420 (QRCCD), Asn428, and 458 to 460 (HVY) contribute to the dUMP site.

It in the N-terminal section; belongs to the dihydrofolate reductase family. This sequence in the C-terminal section; belongs to the thymidylate synthase family.

It carries out the reaction (6S)-5,6,7,8-tetrahydrofolate + NADP(+) = 7,8-dihydrofolate + NADPH + H(+). It catalyses the reaction dUMP + (6R)-5,10-methylene-5,6,7,8-tetrahydrofolate = 7,8-dihydrofolate + dTMP. The protein operates within cofactor biosynthesis; tetrahydrofolate biosynthesis; 5,6,7,8-tetrahydrofolate from 7,8-dihydrofolate: step 1/1. In terms of biological role, bifunctional enzyme. Involved in de novo dTMP biosynthesis. Key enzyme in folate metabolism. Catalyzes an essential reaction for de novo glycine and purine synthesis, DNA precursor synthesis, and for the conversion of dUMP to dTMP. The sequence is that of Bifunctional dihydrofolate reductase-thymidylate synthase from Crithidia fasciculata.